We begin with the raw amino-acid sequence, 132 residues long: RING-H2 finger protein ATL39 (132 aa).

A helical membrane pass occupies residues 10-30; sequence TIVFAFASIGFIAFYIINYYI. Residues 85 to 127 form an RING-type; atypical zinc finger; sequence CVVCLNEFKDDETLRLVPPCVHVFHADCVDIWLSHSSTCPICR.

This sequence belongs to the RING-type zinc finger family. ATL subfamily.

It is found in the membrane. It catalyses the reaction S-ubiquitinyl-[E2 ubiquitin-conjugating enzyme]-L-cysteine + [acceptor protein]-L-lysine = [E2 ubiquitin-conjugating enzyme]-L-cysteine + N(6)-ubiquitinyl-[acceptor protein]-L-lysine.. It functions in the pathway protein modification; protein ubiquitination. The sequence is that of RING-H2 finger protein ATL39 (ATL39) from Arabidopsis thaliana (Mouse-ear cress).